We begin with the raw amino-acid sequence, 207 residues long: 8-oxoguanine DNA glycosylase/AP lyase (207 aa).

Residues lysine 128 and aspartate 146 contribute to the active site.

The protein belongs to the type-2 OGG1 family.

It catalyses the reaction 2'-deoxyribonucleotide-(2'-deoxyribose 5'-phosphate)-2'-deoxyribonucleotide-DNA = a 3'-end 2'-deoxyribonucleotide-(2,3-dehydro-2,3-deoxyribose 5'-phosphate)-DNA + a 5'-end 5'-phospho-2'-deoxyribonucleoside-DNA + H(+). Its function is as follows. Catalyzes the excision of an oxidatively damaged form of guanine (7,8-dihydro-8-oxoguanine = 8-oxoG) from DNA. Also cleaves the DNA backbone at apurinic/apyrimidinic sites (AP sites). This chain is 8-oxoguanine DNA glycosylase/AP lyase, found in Saccharolobus islandicus (strain Y.N.15.51 / Yellowstone #2) (Sulfolobus islandicus).